Reading from the N-terminus, the 398-residue chain is MANSRRTAAIIVAGGRGLRAGGGGPKQYRTLAGQPVIYRSMQPFCTHPDVFAVQPVTSPDDIALFEQAVAGLTHRPPANGGATRQQSVYSGLEALAKDAPDIVLIHDAARAFVDAALISRAIVAAQRTGAAVPTIPVTDTIKQVNGTNDVEATPDRATLRIAQTPQAFRYDVILEAHRRAAREGRDDFTDDAAIAEWAGLTVATFEGDAANMKLTTPEDFVREESRLAALLGDIRTGTGYDVHAFGDGDHVWLCGLKVPHNRGFLAHSDGDVGLHALVDAILGALADGDIGSHFPPTDPQWKGAASDKFLKYAIDRVHARGGRIANLEVTMICERPKIGPLREAMRERIAEITGLPVSRIAVKATTSERLGFTGREEGIAATACATIRLPWGPNGLSG.

A 2-C-methyl-D-erythritol 4-phosphate cytidylyltransferase region spans residues 1-234 (MANSRRTAAI…SRLAALLGDI (234 aa)). Residues 235 to 398 (RTGTGYDVHA…LPWGPNGLSG (164 aa)) are 2-C-methyl-D-erythritol 2,4-cyclodiphosphate synthase. 2 residues coordinate a divalent metal cation: aspartate 241 and histidine 243. 4-CDP-2-C-methyl-D-erythritol 2-phosphate contacts are provided by residues 241 to 243 (DVH) and 267 to 268 (HS). Position 275 (histidine 275) interacts with a divalent metal cation. Residues 289 to 291 (DIG), 365 to 368 (TTSE), phenylalanine 372, and arginine 375 each bind 4-CDP-2-C-methyl-D-erythritol 2-phosphate.

It in the N-terminal section; belongs to the IspD/TarI cytidylyltransferase family. IspD subfamily. In the C-terminal section; belongs to the IspF family. It depends on a divalent metal cation as a cofactor.

The enzyme catalyses 2-C-methyl-D-erythritol 4-phosphate + CTP + H(+) = 4-CDP-2-C-methyl-D-erythritol + diphosphate. It carries out the reaction 4-CDP-2-C-methyl-D-erythritol 2-phosphate = 2-C-methyl-D-erythritol 2,4-cyclic diphosphate + CMP. The protein operates within isoprenoid biosynthesis; isopentenyl diphosphate biosynthesis via DXP pathway; isopentenyl diphosphate from 1-deoxy-D-xylulose 5-phosphate: step 2/6. It participates in isoprenoid biosynthesis; isopentenyl diphosphate biosynthesis via DXP pathway; isopentenyl diphosphate from 1-deoxy-D-xylulose 5-phosphate: step 4/6. Bifunctional enzyme that catalyzes the formation of 4-diphosphocytidyl-2-C-methyl-D-erythritol from CTP and 2-C-methyl-D-erythritol 4-phosphate (MEP) (IspD), and catalyzes the conversion of 4-diphosphocytidyl-2-C-methyl-D-erythritol 2-phosphate (CDP-ME2P) to 2-C-methyl-D-erythritol 2,4-cyclodiphosphate (ME-CPP) with a corresponding release of cytidine 5-monophosphate (CMP) (IspF). The chain is Bifunctional enzyme IspD/IspF from Rhodopseudomonas palustris (strain BisA53).